Reading from the N-terminus, the 486-residue chain is Elastin-binding protein EbpS (486 aa).

Residues 1-40 (MSNNFKDDFEKNRQSIDTNSHQDHTEDVEKDQSELEHQDT) are compositionally biased toward basic and acidic residues. Residues 1–314 (MSNNFKDDFE…NHDRDKERKK (314 aa)) form a disordered region. Over 2-204 (SNNFKDDFEK…EPKEHHNGKK (203 aa)) the chain is Extracellular. Positions 14–34 (QSIDTNSHQDHTEDVEKDQSE) are elastin-binding. A compositionally biased stretch (polar residues) spans 64–85 (TNHNKQVHNESQTSEDNVQNEA). Composition is skewed to basic and acidic residues over residues 103-118 (EPSH…EEYY) and 126-143 (DKSH…DTIK). Positions 161-179 (EQSQQPKPYFTTGANQSET) are enriched in polar residues. The segment covering 180–199 (SKNEHDNDSVKQDQDEPKEH) has biased composition (basic and acidic residues). A compositionally biased stretch (low complexity) spans 204 to 225 (KAAAIGAGTAGVAGAAGAMAAS). The chain crosses the membrane as a helical span at residues 205–225 (AAAIGAGTAGVAGAAGAMAAS). At 226–319 (KAKKHSNDAQ…KERKKGGMAK (94 aa)) the chain is on the cytoplasmic side. Over residues 233–246 (DAQNKSNSGKANNS) the composition is skewed to polar residues. The span at 247–259 (TEDKASQDKSKDH) shows a compositional bias: basic and acidic residues. Low complexity predominate over residues 278 to 297 (GAASKSASAASKPHASNNAS). Positions 299 to 314 (NHDEHDNHDRDKERKK) are enriched in basic and acidic residues. A helical membrane pass occupies residues 320–340 (VLLPLIAAVLIIGALAIFGGM). Residues 341-486 (ALNNHNNGTK…IRNGQQIVIP (146 aa)) lie on the Extracellular side of the membrane. The disordered stretch occupies residues 351 to 440 (ENKIANTNKN…QRQGGGQRHT (90 aa)). Residues 361–398 (NADESKDKDTSKDASKDKSKSTDSDKSKEDQDKATKDE) are compositionally biased toward basic and acidic residues. Positions 403–431 (QNNANQANNQAQNNQNQQQANQNQQQQQQ) are enriched in low complexity. Positions 437-485 (QRHTVNGQENLYRIAIQYYGSGSPENVEKIRRANGLSGNNIRNGQQIVI) constitute a LysM domain.

It is found in the cell membrane. In terms of biological role, promotes binding of soluble elastin peptides and tropoelastin to S.aureus cells although it is not able to promote bacterial adherence to immobilized elastin and, therefore, is not a microbial surface component recognizing adhesive matrix molecule (MSCRAMM). This Staphylococcus aureus (strain USA300) protein is Elastin-binding protein EbpS (ebpS).